The chain runs to 586 residues: Zinc finger protein Eos (586 aa).

Disordered regions lie at residues Met1–Phe42 and Glu68–Ser98. Positions Gln25–Leu34 are enriched in basic and acidic residues. Residues Ser79–Ser98 are compositionally biased toward polar residues. Lys100 is covalently cross-linked (Glycyl lysine isopeptide (Lys-Gly) (interchain with G-Cter in SUMO2)). Ser105 is modified (phosphoserine). 4 consecutive C2H2-type zinc fingers follow at residues Leu159–His181, Phe187–His209, Phe215–His237, and Tyr248–His271. The interaction with FOXP3 stretch occupies residues Ala281–Gly586. Lys335 carries the post-translational modification N6-acetyllysine. Residues Arg413–Arg490 form a disordered region. Residues Gly423–Gly433 carry the CTBP-binding motif PEDLG motif. Residues Gln476 to Thr485 are compositionally biased toward pro residues. Lys501 is covalently cross-linked (Glycyl lysine isopeptide (Lys-Gly) (interchain with G-Cter in SUMO2)). 2 consecutive C2H2-type zinc fingers follow at residues Phe531–His553 and Phe559–His583.

This sequence belongs to the Ikaros C2H2-type zinc-finger protein family. As to quaternary structure, self-associates. Interacts with other family members; IKZF1, IKZF2, IKZF3 and IKZF5. Interacts with CTBP2, SPI1 and MITF. Interacts with FOXP3 and CTBP1. In terms of tissue distribution, expressed mainly in the brain. Up-regulated in long term cultured astrocytes. Down-regulated during osteoclast differentiation.

It is found in the nucleus. DNA-binding protein that binds to the 5'GGGAATRCC-3' Ikaros-binding sequence. Interacts with SPI1 and MITF to repress transcription of the CTSK and ACP5 promoters via recruitment of corepressors SIN3A and CTBP2. May be involved in the development of central and peripheral nervous systems. Essential for the inhibitory function of regulatory T-cells (Treg). Mediates FOXP3-mediated gene silencing in regulatory T-cells (Treg) via recruitment of corepressor CTBP1. In Mus musculus (Mouse), this protein is Zinc finger protein Eos (Ikzf4).